A 332-amino-acid polypeptide reads, in one-letter code: 4-hydroxythreonine-4-phosphate dehydrogenase (332 aa).

Residues His138 and Thr139 each contribute to the substrate site. His168, His213, and His269 together coordinate a divalent metal cation. Residues Lys277, Asn286, and Arg295 each contribute to the substrate site.

It belongs to the PdxA family. Homodimer. It depends on Zn(2+) as a cofactor. Mg(2+) is required as a cofactor. Requires Co(2+) as cofactor.

The protein localises to the cytoplasm. The catalysed reaction is 4-(phosphooxy)-L-threonine + NAD(+) = 3-amino-2-oxopropyl phosphate + CO2 + NADH. Its pathway is cofactor biosynthesis; pyridoxine 5'-phosphate biosynthesis; pyridoxine 5'-phosphate from D-erythrose 4-phosphate: step 4/5. In terms of biological role, catalyzes the NAD(P)-dependent oxidation of 4-(phosphooxy)-L-threonine (HTP) into 2-amino-3-oxo-4-(phosphooxy)butyric acid which spontaneously decarboxylates to form 3-amino-2-oxopropyl phosphate (AHAP). The polypeptide is 4-hydroxythreonine-4-phosphate dehydrogenase (Vibrio parahaemolyticus serotype O3:K6 (strain RIMD 2210633)).